The following is a 428-amino-acid chain: Flotillin-2a (428 aa).

Residues C4, C19, and C20 are each lipidated (S-palmitoyl cysteine).

It belongs to the band 7/mec-2 family. Flotillin subfamily. Heterooligomer; Heterooligomerizes with ic complex of flotillins 1 and 2. Palmitoylation may be required for the formation of higher order complexes and for neurite outgrowth in cultured neural stem cells.

The protein resides in the membrane. The protein localises to the endosome. May play a role in axon growth and regeneration. May be involved in epidermal cell adhesion and epidermal structure and function. This chain is Flotillin-2a (flot2a), found in Danio rerio (Zebrafish).